The sequence spans 251 residues: Osmotin-like protein (251 aa).

A signal peptide spans 1–21 (MSHLTTFLVFFLLAFVTYTYA). Cystine bridges form between Cys-31–Cys-226, Cys-73–Cys-83, Cys-88–Cys-94, Cys-142–Cys-214, Cys-147–Cys-197, Cys-155–Cys-165, Cys-169–Cys-178, and Cys-179–Cys-184. Asn-233 carries N-linked (GlcNAc...) asparagine glycosylation.

The protein belongs to the thaumatin family.

The protein is Osmotin-like protein (OLPA) of Nicotiana tabacum (Common tobacco).